Here is a 561-residue protein sequence, read N- to C-terminus: Oxygen-dependent choline dehydrogenase (561 aa).

6–35 (DYIIIGAGSAGNVLATRLTEDADVSVLLLE) provides a ligand contact to FAD. His475 functions as the Proton acceptor in the catalytic mechanism.

It belongs to the GMC oxidoreductase family. The cofactor is FAD.

The enzyme catalyses choline + A = betaine aldehyde + AH2. The catalysed reaction is betaine aldehyde + NAD(+) + H2O = glycine betaine + NADH + 2 H(+). The protein operates within amine and polyamine biosynthesis; betaine biosynthesis via choline pathway; betaine aldehyde from choline (cytochrome c reductase route): step 1/1. Its function is as follows. Involved in the biosynthesis of the osmoprotectant glycine betaine. Catalyzes the oxidation of choline to betaine aldehyde and betaine aldehyde to glycine betaine at the same rate. The polypeptide is Oxygen-dependent choline dehydrogenase (Pseudomonas aeruginosa (strain LESB58)).